Reading from the N-terminus, the 162-residue chain is 2-C-methyl-D-erythritol 2,4-cyclodiphosphate synthase (162 aa).

The a divalent metal cation site is built by Asp12 and His14. 4-CDP-2-C-methyl-D-erythritol 2-phosphate-binding positions include Asp12–His14 and His38–Ser39. His46 contacts a divalent metal cation. Residues Asp60–Gly62, Thr136–Glu139, Phe143, and Arg146 each bind 4-CDP-2-C-methyl-D-erythritol 2-phosphate.

The protein belongs to the IspF family. Homotrimer. It depends on a divalent metal cation as a cofactor.

It catalyses the reaction 4-CDP-2-C-methyl-D-erythritol 2-phosphate = 2-C-methyl-D-erythritol 2,4-cyclic diphosphate + CMP. It participates in isoprenoid biosynthesis; isopentenyl diphosphate biosynthesis via DXP pathway; isopentenyl diphosphate from 1-deoxy-D-xylulose 5-phosphate: step 4/6. Functionally, involved in the biosynthesis of isopentenyl diphosphate (IPP) and dimethylallyl diphosphate (DMAPP), two major building blocks of isoprenoid compounds. Catalyzes the conversion of 4-diphosphocytidyl-2-C-methyl-D-erythritol 2-phosphate (CDP-ME2P) to 2-C-methyl-D-erythritol 2,4-cyclodiphosphate (ME-CPP) with a corresponding release of cytidine 5-monophosphate (CMP). The sequence is that of 2-C-methyl-D-erythritol 2,4-cyclodiphosphate synthase from Porphyromonas gingivalis (strain ATCC BAA-308 / W83).